Consider the following 458-residue polypeptide: tRNA modification GTPase MnmE (458 aa).

The (6S)-5-formyl-5,6,7,8-tetrahydrofolate site is built by R26, E88, and R127. Positions 224–378 (GLSTAIIGRP…IEDRINQLFF (155 aa)) constitute a TrmE-type G domain. N234 lines the K(+) pocket. Residues 234–239 (NVGKSS), 253–259 (TDIAGTT), and 278–281 (DTAG) each bind GTP. S238 serves as a coordination point for Mg(2+). Residues T253, I255, and T258 each coordinate K(+). T259 is a binding site for Mg(2+). K458 serves as a coordination point for (6S)-5-formyl-5,6,7,8-tetrahydrofolate.

Belongs to the TRAFAC class TrmE-Era-EngA-EngB-Septin-like GTPase superfamily. TrmE GTPase family. Homodimer. Heterotetramer of two MnmE and two MnmG subunits. The cofactor is K(+).

It is found in the cytoplasm. Exhibits a very high intrinsic GTPase hydrolysis rate. Involved in the addition of a carboxymethylaminomethyl (cmnm) group at the wobble position (U34) of certain tRNAs, forming tRNA-cmnm(5)s(2)U34. This chain is tRNA modification GTPase MnmE, found in Streptococcus pyogenes serotype M28 (strain MGAS6180).